The chain runs to 64 residues: MENTSITIEFSSKFWPYFTLIHMITTIISLLIIISIMIAILNKLCEYNVFHNKTFELPRARVNT.

At 1–20 the chain is on the intravirion side; it reads MENTSITIEFSSKFWPYFTL. The interaction with host BCAP31 stretch occupies residues 6–15; the sequence is ITIEFSSKFW. Residues 21–44 form a helical; Signal-anchor for type II membrane protein membrane-spanning segment; sequence IHMITTIISLLIIISIMIAILNKL. An interaction with small-molecule inhibitor region spans residues 38–43; it reads IAILNK. Topologically, residues 45-64 are virion surface; sequence CEYNVFHNKTFELPRARVNT. A glycan (N-linked (GlcNAc...) asparagine; by host) is linked at Asn52.

This sequence belongs to the orthopneumovirus small hydrophobic protein family. As to quaternary structure, homopentamer forming a funnel-like pore. Interacts with glycoprotein G; this interaction occurs on the surface of virion particles and infected cells. Interacts with host BCAP31 (via C-terminus); this interaction is direct. Post-translationally, four species of SH have been detected in infected cell cytoplasm: a 7.5 kDa non-glycosylated form (SH0), a 13-15 kDa form that contains one or two N-linked carbohydrate side chains of the high-mannose type (SHg), a 21-30 kDa polylactosaminoglycan-modified form of the protein (SHp), and the isoform generated by alternative translational initiation. Of these different forms, SH0 is by far the most abundant protein detected during virus infection. In terms of processing, tyrosine phosphorylated.

It localises to the virion membrane. The protein resides in the host cell membrane. The protein localises to the host Golgi apparatus membrane. It is found in the host endoplasmic reticulum membrane. With respect to regulation, channel activity is inhibited by copper. Also inhibited by small-molecule pyronin B. Functionally, viroporin that forms a homopentameric ion channel displaying low ion selectivity. May play a role in virus morphogenesis and pathogenicity at various stages of the viral life cycle. Accumulates at the membrane of the Golgi apparatus in infected cells and may facilitate virus release by modifying the secretory pathway. May enhance host membrane permeability and disrupt cellular ion homeostasis, which can be sensed as damage-associated molecular patterns/danger signals, triggering NLRP3 inflammasome activation and inflammatory immune response. Also inhibits host TNFA-mediated signaling pathway and may delay apoptosis, allowing time for the virus to replicate. In Homo sapiens (Human), this protein is Small hydrophobic protein.